A 407-amino-acid chain; its full sequence is Tryptophan synthase beta chain (407 aa).

Position 98 is an N6-(pyridoxal phosphate)lysine (lysine 98).

Belongs to the TrpB family. Tetramer of two alpha and two beta chains. Pyridoxal 5'-phosphate is required as a cofactor.

The enzyme catalyses (1S,2R)-1-C-(indol-3-yl)glycerol 3-phosphate + L-serine = D-glyceraldehyde 3-phosphate + L-tryptophan + H2O. Its pathway is amino-acid biosynthesis; L-tryptophan biosynthesis; L-tryptophan from chorismate: step 5/5. Its function is as follows. The beta subunit is responsible for the synthesis of L-tryptophan from indole and L-serine. The protein is Tryptophan synthase beta chain of Bradyrhizobium sp. (strain ORS 278).